The following is a 463-amino-acid chain: MATYPCQLCGKTFLTLEKFTIHNYSHSRERPYKCLQPDCGKAFISRYKLMRHMATHSPQKSHQCAHCEKTFNRKDHLKNHLQTHDPNKMAFGCEECGKKYNTMLGYKRHLALHAASSGDLTCGVCALELGSTEVLLDHLKAHAEEKPPSGTKEKKHQCDHCERCFYTRKDVRRHLVVHTGCKDFLCQFCAQRFGRKDHLTRHTKKTHSQELMKESLQSGDLLSTFHSISPQFQLKAAPLSPFPLGAPAQNGLASSLPAEVHSHTHNPSEQTSQPVQALPELLAPLHPVAPPTSPPQPLQNHKYNTSSTSYSPLASLPLKADTKGFCNTNLLEDLPLQEPQSPHKLNPGFDLAKGGAGKVNLPKELPADAVNLTIPASLDLSPLLGFWQLPPPATQNAFGNSTLTLGPGESLPHRLSCLGQQQQDPSLAMSTMSLGQLPLPPIPHVFPAGTGSAILPHFHHAFR.

7 C2H2-type zinc fingers span residues 4–26, 32–56, 62–84, 91–113, 120–142, 156–178, and 184–207; these read YPCQLCGKTFLTLEKFTIHNYSH, YKCLQPDCGKAFISRYKLMRHMATH, HQCAHCEKTFNRKDHLKNHLQTH, FGCEECGKKYNTMLGYKRHLALH, LTCGVCALELGSTEVLLDHLKAH, HQCDHCERCFYTRKDVRRHLVVH, and FLCQFCAQRFGRKDHLTRHTKKTH. A disordered region spans residues 285-310; the sequence is LHPVAPPTSPPQPLQNHKYNTSSTSY. Pro residues predominate over residues 287–297; that stretch reads PVAPPTSPPQP. The span at 298 to 310 shows a compositional bias: polar residues; the sequence is LQNHKYNTSSTSY.

Belongs to the krueppel C2H2-type zinc-finger protein family. In terms of assembly, interacts with THRSP.

The protein resides in the nucleus. Acts as a transcriptional activator. Involved in the transcriptional regulation of type 1 receptor for pituitary adenylate cyclase-activating polypeptide. This chain is Zinc finger protein PLAGL1 (PLAGL1), found in Sus scrofa (Pig).